Reading from the N-terminus, the 466-residue chain is Asparagine--tRNA ligase (466 aa).

Belongs to the class-II aminoacyl-tRNA synthetase family. Homodimer.

The protein localises to the cytoplasm. The catalysed reaction is tRNA(Asn) + L-asparagine + ATP = L-asparaginyl-tRNA(Asn) + AMP + diphosphate + H(+). The sequence is that of Asparagine--tRNA ligase from Shewanella baltica (strain OS155 / ATCC BAA-1091).